A 299-amino-acid polypeptide reads, in one-letter code: Riboflavin transporter ImpX (299 aa).

EamA domains lie at 6 to 144 and 162 to 294; these read KGAL…YLLT and SLYS…SIIK. 10 helical membrane passes run 7–27, 34–54, 68–88, 101–121, 129–149, 158–178, 202–222, 224–244, 253–273, and 276–296; these read GALL…ALTP, VPFV…ILFG, DLFF…LCIV, VVTL…RLLL, YLFW…EFHL, LLPA…ATVF, IMFV…ATAG, WLIF…LYYF, VATM…YLIN, and VLSP…IKIS.

This sequence belongs to the EamA transporter family.

It localises to the cell membrane. Transports riboflavin into the cell. In Fusobacterium nucleatum subsp. nucleatum (strain ATCC 23726 / VPI 4351), this protein is Riboflavin transporter ImpX.